The sequence spans 267 residues: Nus factor SuhB (267 aa).

Glu67, Asp84, and Leu86 together coordinate Mg(2+). Position 67 (Glu67) interacts with substrate. Substrate-binding positions include 86 to 89 (LDGT), Arg183, and Asp212.

It belongs to the inositol monophosphatase superfamily. Homodimer. The rRNA transcription and antitermination complex (rrnTAC) consists of RNA polymerase (RNAP), NusA, NusB, NusE (rpsJ), NusG, SubB, ribosomal protein S4, DNA and precursor rRNA; S4 is more flexible than other subunits. Requires Mg(2+) as cofactor.

It is found in the cytoplasm. It carries out the reaction a myo-inositol phosphate + H2O = myo-inositol + phosphate. Functionally, part of the processive rRNA transcription and antitermination complex (rrnTAC). The complex forms an RNA-chaperone ring around the RNA exit tunnel of RNA polymerase (RNAP). It supports rapid transcription and antitermination of rRNA operons, cotranscriptional rRNA folding, and annealing of distal rRNA regions to allow correct ribosome biogenesis. This subunit may play a central role in organizing the structure. The protein is Nus factor SuhB of Vibrio cholerae serotype O1 (strain ATCC 39315 / El Tor Inaba N16961).